A 267-amino-acid chain; its full sequence is Tryptophan synthase alpha chain (267 aa).

Catalysis depends on proton acceptor residues Glu-43 and Asp-54.

It belongs to the TrpA family. Tetramer of two alpha and two beta chains.

The enzyme catalyses (1S,2R)-1-C-(indol-3-yl)glycerol 3-phosphate + L-serine = D-glyceraldehyde 3-phosphate + L-tryptophan + H2O. It participates in amino-acid biosynthesis; L-tryptophan biosynthesis; L-tryptophan from chorismate: step 5/5. Functionally, the alpha subunit is responsible for the aldol cleavage of indoleglycerol phosphate to indole and glyceraldehyde 3-phosphate. This chain is Tryptophan synthase alpha chain, found in Bacillus subtilis subsp. natto.